Consider the following 208-residue polypeptide: Holliday junction resolvase RecU (208 aa).

The tract at residues 1 to 25 (MNYPNGKPFNRNKTKVGRTNDHKSS) is disordered. Mg(2+)-binding residues include threonine 87, aspartate 89, glutamate 102, and glutamine 121.

Belongs to the RecU family. Mg(2+) serves as cofactor.

Its subcellular location is the cytoplasm. The catalysed reaction is Endonucleolytic cleavage at a junction such as a reciprocal single-stranded crossover between two homologous DNA duplexes (Holliday junction).. Functionally, endonuclease that resolves Holliday junction intermediates in genetic recombination. Cleaves mobile four-strand junctions by introducing symmetrical nicks in paired strands. Promotes annealing of linear ssDNA with homologous dsDNA. Required for DNA repair, homologous recombination and chromosome segregation. The chain is Holliday junction resolvase RecU from Staphylococcus carnosus (strain TM300).